Consider the following 184-residue polypeptide: FMRFamide-like neuropeptides 3 (184 aa).

The first 23 residues, 1–23 (MISPNHLILLFCVNCAFLVASDA), serve as a signal peptide directing secretion. The propeptide occupies 24–25 (TP). F35 is modified (phenylalanine amide). Positions 39–73 (AIADEMTFEEDGYYPSNVMWKRSTVDSSEPVIRDQ) are excised as a propeptide. Phenylalanine amide is present on residues F82, F95, F111, and F126. The segment at 90–110 (FGTMRFGKRNPENDTPFGTMR) is disordered. The propeptide occupies 130–142 (EDGNAPFGTMKFG). A disordered region spans residues 150–184 (LGTMRFGKRSADDSAPFGTMRFGKRNPLGTMRFGK). A phenylalanine amide mark is found at F155, F171, and F182.

The protein belongs to the FARP (FMRFamide related peptide) family. Each flp gene is expressed in a distinct set of neurons. Flp-3 is expressed in the IL1 and PQR neurons.

It localises to the secreted. FMRFamides and FMRFamide-like peptides are neuropeptides. SAEPFGTMRF-amide inhibits the activity of dissected pharyngeal myogenic muscle system. The chain is FMRFamide-like neuropeptides 3 from Caenorhabditis elegans.